A 60-amino-acid polypeptide reads, in one-letter code: UPF0181 protein ESA_01442 (60 aa).

This sequence belongs to the UPF0181 family.

The sequence is that of UPF0181 protein ESA_01442 from Cronobacter sakazakii (strain ATCC BAA-894) (Enterobacter sakazakii).